The following is a 21-amino-acid chain: Venom peptide Tv1 (21 aa).

3 disulfide bridges follow: Cys4-Cys20, Cys5-Cys21, and Cys7-Cys16.

As to expression, expressed by the salivary gland. This peptide is considered as a venom peptide.

The protein localises to the secreted. Functionally, injections of 20 uM of this synthetic peptide (Ile) causes partial paralysis to polychaete worms (Nereis virens), the natural prey of terebrid snails. This paralysis may be due to an inhibition of nicotinic receptors at the neuromuscular junction. In Terebra variegata (Variegate auger snail), this protein is Venom peptide Tv1.